The primary structure comprises 700 residues: Elongation factor G (700 aa).

Positions 6–286 (HKVRNIGIMA…AVIDYLPSPL (281 aa)) constitute a tr-type G domain. Residues 15–22 (AHIDAGKT), 79–83 (DTPGH), and 133–136 (NKMD) contribute to the GTP site.

The protein belongs to the TRAFAC class translation factor GTPase superfamily. Classic translation factor GTPase family. EF-G/EF-2 subfamily.

Its subcellular location is the cytoplasm. Catalyzes the GTP-dependent ribosomal translocation step during translation elongation. During this step, the ribosome changes from the pre-translocational (PRE) to the post-translocational (POST) state as the newly formed A-site-bound peptidyl-tRNA and P-site-bound deacylated tRNA move to the P and E sites, respectively. Catalyzes the coordinated movement of the two tRNA molecules, the mRNA and conformational changes in the ribosome. This chain is Elongation factor G, found in Leifsonia xyli subsp. xyli (strain CTCB07).